The following is a 224-amino-acid chain: uncharacterized protein (224 aa).

Residues 11 to 42 (YYCKYCQIFVKDTPFARRSHEQTYKHQDAIKK) form a Matrin-type zinc finger. Residues 67–80 (ATATTASAVSSELA) are compositionally biased toward low complexity. Disordered stretches follow at residues 67-158 (ATAT…RNRE) and 172-224 (VKPK…YDQS). Over residues 87-98 (KEHPKLRPSKKK) the composition is skewed to basic residues. Residues 108–122 (TSSTETDTISTTHTS) are compositionally biased toward low complexity. The span at 175-199 (KNLDKVPKLAENEGNKSLESKESNE) shows a compositional bias: basic and acidic residues. The span at 203–216 (VFKKKKSGKLRTKS) shows a compositional bias: basic residues.

It is found in the nucleus. The protein localises to the nucleolus. This is an uncharacterized protein from Schizosaccharomyces pombe (strain 972 / ATCC 24843) (Fission yeast).